A 474-amino-acid chain; its full sequence is MKVTLPDFNKANVLVVGDVMLDRYWYGPTSRISPEAPVPVVKVDTIEERPGGAANVAMNIASLGANSRLVGLTGIDEAAKALSNTLSQVNVRCDFVSIATHPTITKLRVLSRNQQLIRLDFEEGFSNVSPEPIYERIQQALPSMGALILSDYAKGALSHVQQMIQLAKKAGVPVLIDPKGSDFERYRGATLLTPNMSEFEQVVGVCHTDDELVEKGTQLVKDLALDALLITRSERGMSLLQANEAPLHLPTQAQEVYDVTGAGDTVIGVLATALAAGKPLAEACFLANAAAGVVVGKLGTSTVSPIELENAIRGRADNGFGIMEESQLKQAVALARQRGERIVMTNGCFDILHAGHVSYLANARKLGDRLIVAVNSDASTKRLKGESRPVNPLEQRMTVLGALGAVDWVVAFEEDTPQRLIASVLPDILVKGGDYKPEDIAGSKEVWAAGGEVKVLNFEDGISTTNIINAIKKK.

The segment at 1 to 318 (MKVTLPDFNK…ENAIRGRADN (318 aa)) is ribokinase. 195 to 198 (NMSE) provides a ligand contact to ATP. The active site involves aspartate 264. The cytidylyltransferase stretch occupies residues 344 to 474 (MTNGCFDILH…TNIINAIKKK (131 aa)).

This sequence in the N-terminal section; belongs to the carbohydrate kinase PfkB family. It in the C-terminal section; belongs to the cytidylyltransferase family. As to quaternary structure, homodimer.

The catalysed reaction is D-glycero-beta-D-manno-heptose 7-phosphate + ATP = D-glycero-beta-D-manno-heptose 1,7-bisphosphate + ADP + H(+). It catalyses the reaction D-glycero-beta-D-manno-heptose 1-phosphate + ATP + H(+) = ADP-D-glycero-beta-D-manno-heptose + diphosphate. It participates in nucleotide-sugar biosynthesis; ADP-L-glycero-beta-D-manno-heptose biosynthesis; ADP-L-glycero-beta-D-manno-heptose from D-glycero-beta-D-manno-heptose 7-phosphate: step 1/4. Its pathway is nucleotide-sugar biosynthesis; ADP-L-glycero-beta-D-manno-heptose biosynthesis; ADP-L-glycero-beta-D-manno-heptose from D-glycero-beta-D-manno-heptose 7-phosphate: step 3/4. Its function is as follows. Catalyzes the phosphorylation of D-glycero-D-manno-heptose 7-phosphate at the C-1 position to selectively form D-glycero-beta-D-manno-heptose-1,7-bisphosphate. In terms of biological role, catalyzes the ADP transfer from ATP to D-glycero-beta-D-manno-heptose 1-phosphate, yielding ADP-D-glycero-beta-D-manno-heptose. This Proteus mirabilis (strain HI4320) protein is Bifunctional protein HldE.